A 471-amino-acid chain; its full sequence is Putative multidrug resistance protein MdtD (471 aa).

At 1 to 11 the chain is on the periplasmic side; sequence MTDLPDSTRWQ. A helical membrane pass occupies residues 12–32; sequence LWIVAFGFFMQSLDTTIVNTA. The Cytoplasmic portion of the chain corresponds to 33–48; that stretch reads LPSMAQSLGESPLHMH. The chain crosses the membrane as a helical span at residues 49 to 69; it reads MVIVSYVLTVAVMLPASGWLA. The Periplasmic segment spans residues 70–76; it reads DKVGVRN. The helical transmembrane segment at 77-97 threads the bilayer; sequence IFFTAIVLFTLGSLFCALSGT. Topologically, residues 98–101 are cytoplasmic; the sequence is LNEL. The helical transmembrane segment at 102–124 threads the bilayer; sequence LLARALQGVGGAMMVPVGRLTVM. Topologically, residues 125–137 are periplasmic; that stretch reads KIVPREQYMAAMT. The helical transmembrane segment at 138–158 threads the bilayer; the sequence is FVTLPGQVGPLLGPALGGLLV. The Cytoplasmic segment spans residues 159–164; sequence EYASWH. The chain crosses the membrane as a helical span at residues 165-185; the sequence is WIFLINIPVGIIGAIATLMLM. The Periplasmic segment spans residues 186–196; that stretch reads PNYTMQTRRFD. A helical membrane pass occupies residues 197–217; it reads LSGFLLLAVGMAVLTLALDGS. Residues 218-224 are Cytoplasmic-facing; sequence KGTGLSP. A helical transmembrane segment spans residues 225 to 245; the sequence is LAITGLVAVGVVALVLYLLHA. The Periplasmic portion of the chain corresponds to 246-262; that stretch reads RNNHRALFSLKLFRTRT. The chain crosses the membrane as a helical span at residues 263 to 283; sequence FSLGLAGSFAGRIGSGMLPFM. Topologically, residues 284-285 are cytoplasmic; the sequence is TP. Residues 286–306 traverse the membrane as a helical segment; that stretch reads VFLQIGLGFSPFHAGLMMIPM. Over 307–341 the chain is Periplasmic; the sequence is VLGSMGMKRIVVQVVNRFGYRRVLVATTLGLSLVT. Residues 342-362 traverse the membrane as a helical segment; that stretch reads LLFMTTALLGWYYVLPFVLFL. Over 363 to 395 the chain is Cytoplasmic; it reads QGMVNSTRFSSMNTLTLKDLPDNLASSGNSLLS. Residues 396–416 traverse the membrane as a helical segment; that stretch reads MIMQLSMSIGVTIAGLLLGLF. At 417–430 the chain is on the periplasmic side; sequence GSQHVSVDSGTTQT. Residues 431–451 form a helical membrane-spanning segment; that stretch reads VFMYTWLSMAFIIALPAFIFA. Topologically, residues 452-471 are cytoplasmic; the sequence is RVPNDTHQNVAISRRKRSAQ.

It belongs to the major facilitator superfamily. TCR/Tet family.

It is found in the cell inner membrane. This Escherichia coli O127:H6 (strain E2348/69 / EPEC) protein is Putative multidrug resistance protein MdtD.